The primary structure comprises 846 residues: Choline trimethylamine-lyase (846 aa).

One can recognise a PFL domain in the interval Pro-60–Arg-718. Cys-489 serves as the catalytic Cysteine radical intermediate. Residue Glu-491 is the Proton acceptor of the active site. The Glycine radical domain occupies Asp-725–Phe-846. Gly-821 is modified (glycine radical).

The protein belongs to the glycyl radical enzyme (GRE) family. CutC subfamily. Homodimer. Requires the activating protein CutD to generate the key active site glycyl radical on Gly-821 that is involved in catalysis.

It catalyses the reaction choline = trimethylamine + acetaldehyde. The protein operates within amine and polyamine metabolism; choline degradation. Functionally, glycine radical enzyme that catalyzes the cleavage of a C-N bond in choline, producing trimethylamine (TMA) and acetaldehyde. Is involved in the anaerobic choline utilization pathway that allows D.alaskensis to grow on choline as a source of carbon and energy. Is strictly specific for choline as substrate. This is Choline trimethylamine-lyase from Oleidesulfovibrio alaskensis (strain ATCC BAA-1058 / DSM 17464 / G20) (Desulfovibrio alaskensis).